We begin with the raw amino-acid sequence, 586 residues long: Putative Lon protease homolog (586 aa).

The region spanning 346 to 543 (GERIGQINAL…TDALPLLLNL (198 aa)) is the Lon proteolytic domain. Residues Ser438 and Lys481 contribute to the active site.

It belongs to the peptidase S16 family.

The protein is Putative Lon protease homolog (ycbZ) of Escherichia coli (strain K12).